A 100-amino-acid polypeptide reads, in one-letter code: Integration host factor subunit alpha (100 aa).

The protein belongs to the bacterial histone-like protein family. As to quaternary structure, heterodimer of an alpha and a beta chain.

Functionally, this protein is one of the two subunits of integration host factor, a specific DNA-binding protein that functions in genetic recombination as well as in transcriptional and translational control. The sequence is that of Integration host factor subunit alpha from Caulobacter sp. (strain K31).